Consider the following 194-residue polypeptide: Probable nicotinate-nucleotide adenylyltransferase (194 aa).

It belongs to the NadD family.

It catalyses the reaction nicotinate beta-D-ribonucleotide + ATP + H(+) = deamido-NAD(+) + diphosphate. It participates in cofactor biosynthesis; NAD(+) biosynthesis; deamido-NAD(+) from nicotinate D-ribonucleotide: step 1/1. Its function is as follows. Catalyzes the reversible adenylation of nicotinate mononucleotide (NaMN) to nicotinic acid adenine dinucleotide (NaAD). The sequence is that of Probable nicotinate-nucleotide adenylyltransferase from Christiangramia forsetii (strain DSM 17595 / CGMCC 1.15422 / KT0803) (Gramella forsetii).